The following is a 190-amino-acid chain: MKQLFLIIGAPGSGKTTDASIIANDNANITHYSTGDLLRAEVASGSELGKTIDSFISKGNLVPLEVVVNTIITALKNAPTNTILIDGYPRSVEQMLEFDKVLKNQSEVNLKGVIEVKVSEEVARERVLGRARGADDNEEVFNNRMKVYLEPLNEITNFYAKENIHHIINGERSIEAIVADMKNLINELLK.

12-17 (GSGKTT) contacts ATP. Residues 33 to 62 (STGDLLRAEVASGSELGKTIDSFISKGNLV) form an NMP region. AMP-binding positions include threonine 34, arginine 39, 60–62 (NLV), 87–90 (GYPR), and glutamine 94. The LID stretch occupies residues 129 to 135 (GRARGAD). Arginine 130 is a binding site for ATP. Residues arginine 132 and arginine 144 each coordinate AMP. Position 172 (arginine 172) interacts with ATP.

The protein belongs to the adenylate kinase family. Monomer.

The protein resides in the cytoplasm. The enzyme catalyses AMP + ATP = 2 ADP. Its pathway is purine metabolism; AMP biosynthesis via salvage pathway; AMP from ADP: step 1/1. Its function is as follows. Catalyzes the reversible transfer of the terminal phosphate group between ATP and AMP. Plays an important role in cellular energy homeostasis and in adenine nucleotide metabolism. In Campylobacter lari (strain RM2100 / D67 / ATCC BAA-1060), this protein is Adenylate kinase.